Consider the following 379-residue polypeptide: Cytochrome b (379 aa).

The next 4 membrane-spanning stretches (helical) occupy residues 34–54 (FGSL…LLAT), 78–99 (WLIR…YLHI), 114–134 (WNIG…GYVL), and 179–199 (FFAL…IHLT). Heme b-binding residues include His84 and His98. Residues His183 and His197 each contribute to the heme b site. Position 202 (His202) interacts with a ubiquinone. The next 4 membrane-spanning stretches (helical) occupy residues 227-247 (TKDM…AFFF), 289-309 (LGGV…PLLH), 321-341 (MSQL…WIGS), and 348-368 (FIII…FLFP).

The protein belongs to the cytochrome b family. The cytochrome bc1 complex contains 11 subunits: 3 respiratory subunits (MT-CYB, CYC1 and UQCRFS1), 2 core proteins (UQCRC1 and UQCRC2) and 6 low-molecular weight proteins (UQCRH/QCR6, UQCRB/QCR7, UQCRQ/QCR8, UQCR10/QCR9, UQCR11/QCR10 and a cleavage product of UQCRFS1). This cytochrome bc1 complex then forms a dimer. Heme b is required as a cofactor.

The protein localises to the mitochondrion inner membrane. Functionally, component of the ubiquinol-cytochrome c reductase complex (complex III or cytochrome b-c1 complex) that is part of the mitochondrial respiratory chain. The b-c1 complex mediates electron transfer from ubiquinol to cytochrome c. Contributes to the generation of a proton gradient across the mitochondrial membrane that is then used for ATP synthesis. The polypeptide is Cytochrome b (MT-CYB) (Tinamus major (Great tinamou)).